We begin with the raw amino-acid sequence, 485 residues long: Peroxisomal catalase (485 aa).

Residues His-53 and Asn-126 contribute to the active site. Heme is bound at residue Tyr-336.

This sequence belongs to the catalase family. Homotetramer. The cofactor is heme.

It is found in the peroxisome matrix. It catalyses the reaction 2 H2O2 = O2 + 2 H2O. Catalyzes the degradation of hydrogen peroxide (H(2)O(2)) generated by peroxisomal oxidases to water and oxygen, thereby protecting cells from the toxic effects of hydrogen peroxide. The sequence is that of Peroxisomal catalase (CAT1) from Candida albicans (strain SC5314 / ATCC MYA-2876) (Yeast).